The primary structure comprises 152 residues: CASP-like protein 5C3 (152 aa).

At 1–17 (MVEVPGSVGTTASLSLR) the chain is on the cytoplasmic side. Residues 18–38 (LGQMVLAFGSLLFMTIGVRFY) traverse the membrane as a helical segment. The Extracellular portion of the chain corresponds to 39–42 (QFTA). The chain crosses the membrane as a helical span at residues 43-63 (FCYLVTIMSLAIPWNLTLAMV). Topologically, residues 64–78 (DIYCVILQQPFQKPR) are cytoplasmic. The helical transmembrane segment at 79–99 (ILLAISIGDWVVSVLALASAS) threads the bilayer. Over 100–128 (SAASVVDILRSNESSCPPTICNRYQFAAT) the chain is Extracellular. An N-linked (GlcNAc...) asparagine glycan is attached at N111. The helical transmembrane segment at 129–149 (LAFLTWFLSLSSSLFNLWLLP) threads the bilayer. Topologically, residues 150–152 (SLI) are cytoplasmic.

This sequence belongs to the Casparian strip membrane proteins (CASP) family. Homodimer and heterodimers. In terms of tissue distribution, expressed in the floral organ abscission zone and flower buds.

It is found in the cell membrane. In Arabidopsis thaliana (Mouse-ear cress), this protein is CASP-like protein 5C3.